A 223-amino-acid polypeptide reads, in one-letter code: Cutinase 4 (223 aa).

The signal sequence occupies residues 1 to 26 (MPLPLLPPLLLPLEALLDLALHLVDS). Residues Cys60 and Cys133 are joined by a disulfide bond. The active-site Nucleophile is Ser144. Cys187 and Cys194 are joined by a disulfide. Residue Asp191 is part of the active site. His203 (proton donor/acceptor) is an active-site residue.

The protein belongs to the cutinase family. Post-translationally, the 2 disulfide bonds play a critical role in holding the catalytic residues in juxta-position; reduction of the disulfide bridges results in the complete inactivation of the enzyme.

It localises to the secreted. It catalyses the reaction cutin + H2O = cutin monomers.. In terms of biological role, catalyzes the hydrolysis of complex carboxylic polyesters found in the cell wall of plants. Degrades cutin, a macromolecule that forms the structure of the plant cuticle. Also degrades suberin, a specialized macromolecule found in the cell wall of various plant tissues. The sequence is that of Cutinase 4 from Emericella nidulans (strain FGSC A4 / ATCC 38163 / CBS 112.46 / NRRL 194 / M139) (Aspergillus nidulans).